The sequence spans 346 residues: MPTNFAAIVPGKNQSLVVQEAPYPTAGENRIVVRVHALAVNAVDYATQMMGETLFPWVTYPLVLGEDIAGEVVAIGPGVTRFKPGDRVVGHAVGTNSNNSAEGAFQQYVVLLENMASPLPHALEYQQAAVVPLAFSTAIVGLFQKDYLGLQIPSLTPTRTGKTLLIWGGATSVGCNAIQLAVAAGYEVITTCSPHNFDLVKSLGATAVFDYKKPSIRDDLREAFRGKTCAGALAIAGVVPQTRNEAAEACLNLVAESEGDKFVALSMPAPPNVPDGVSCKFIFASTVKDNEVSHQLYGYLGEALAHGSFIAAPEAEVVGTGLEAVQGALNALKQGVSAKKLVVTLP.

43-48 (VDYATQ) contributes to the NADP(+) binding site. 133–140 (LAFSTAIV) is a binding site for substrate. NADP(+) is bound by residues 170-173 (ATSV), 193-196 (SPHN), Tyr-211, and 251-252 (LN). A substrate-binding site is contributed by 269 to 273 (APPNV). 336–337 (VS) lines the NADP(+) pocket.

The protein belongs to the zinc-containing alcohol dehydrogenase family.

Its pathway is secondary metabolite biosynthesis. Functionally, dehydrogenase; part of the gene cluster that mediates the biosynthesis of azaphilones, a class of fungal metabolites characterized by a highly oxygenated pyrano-quinone bicyclic core and exhibiting a broad range of bioactivities. In the first step, the non-reducing polyketide synthase azaA forms the hexaketide precursor from successive condensations of five malonyl-CoA units, presumably with a simple acetyl-CoA starter unit. The reactive polyketide chain then undergoes a PT-mediated C2-C7 cyclization to afford the aromatic ring and is eventually released as an aldehyde through the R-domain. The putative ketoreductase azaE is proposed to catalyze the reduction of the terminal ketone resulting in the early culture product FK17-P2a. The monooxygenase azaH was demonstrated to be the only enzyme required to convert FK17-P2a to azanigerone E. AzaH first hydroxylates the benzaldehyde intermediate FK17-P2a at C4, which triggers the formation of the pyran-ring to afford azanigerone E. In parallel, the 2,4-dimethylhexanoyl chain is synthesized by the HR-PKS azaB and is proposed to be transferred to the C4-hydroxyl of azanigerone E by the acyltransferase azaD directly from the ACP domain of azaB. Alternatively, the 2,4-dimethyl-hexanoyl chain may be offloaded from the HR-PKS as a carboxylic acid and converted to an acyl-CoA by azaF. The resulting acyl-CoA molecule could then be taken up as a substrate by AzaD to form azanigerone B. To yield the carboxylic acid substituent in azanigerone A, the hydroxypropyl side chain of azanigerone B would need to undergo a C-C oxidative cleavage catalyzed by cytochrome P450 AzaI. AzaI is proposed to act on a vicinal diol that leads to a C-C bond scission either through an alkoxyradical intermediate or a peroxy complex. In the biosynthesis of azanigerone A, azanigerone B first undergoes hydroxylation at C10, possibly catalyzed by one of the two FAD-dependent monooxygenases encoded in the cluster, azaG or azaL, resulting in the vicinal diol azanigerone C. Oxidative cleavage of azanigerone C by azaI would yield the corresponding aldehyde derivative of azanigerone A. Finally, the dehydrogenase azaJ is proposed to convert the aldehyde functional group into the carboxylic acid, completing the conversion from azanigerone B to azanigerone A. Alternatively, the oxidation of aldehyde to carboxylic acid may be catalyzed by the same P450 enzyme azaI via consecutive oxidation or by endogenous alcohol dehydrogenase. This is Dehydrogenase azaJ from Aspergillus niger (strain ATCC 1015 / CBS 113.46 / FGSC A1144 / LSHB Ac4 / NCTC 3858a / NRRL 328 / USDA 3528.7).